The sequence spans 378 residues: UPF0754 membrane protein BCAH820_0954 (378 aa).

2 helical membrane-spanning segments follow: residues 1-21 (MNIW…GGFT) and 357-377 (YLGA…LLFL).

The protein belongs to the UPF0754 family.

The protein localises to the cell membrane. The protein is UPF0754 membrane protein BCAH820_0954 of Bacillus cereus (strain AH820).